A 501-amino-acid polypeptide reads, in one-letter code: Sensor histidine kinase PdtaS (501 aa).

Residues 4–150 (LGDLLAEHTV…HLETAYRLCA (147 aa)) form a GAF region. The segment at 179 to 291 (DGFIRLDVDG…TEVKRRDRAL (113 aa)) is PAS-like. One can recognise a Histidine kinase domain in the interval 300–495 (EIHHRVKNNL…DVVLRVPVGR (196 aa)). Phosphohistidine; by autocatalysis is present on histidine 303.

Post-translationally, autophosphorylated.

Its subcellular location is the cytoplasm. The enzyme catalyses ATP + protein L-histidine = ADP + protein N-phospho-L-histidine.. In terms of biological role, member of the two-component regulatory system PdtaR/PdtaS. This two-component system plays an essential role in mycobacterial adaptation to poor nutrient conditions. Nutrient deprivation results in increasing intracellular concentrations of cyclic diguanosine monophosphate (c-di-GMP), which binds to the PdtaS sensor and promotes its autophosphorylation, leading to the activation of the signaling cascade. The phosphate group is then transferred to PdtaR. Functionally, in addition, the PdtaR/PdtaS two-component system controls copper and nitric oxide (NO) resistance downstream of the intramembrane protease Rip1. This coupled Rip1/PdtaS/PdtaR circuit controls NO resistance and acute lung infection in mice by relieving PdtaR/PdtaS-mediated repression of isonitrile chalkophore biosynthesis. Two signals are required to fully inactivate the PdtaR/PdtaS system and mediate NO resistance: a cytoplasmic inhibitory signal through the PdtaS kinase mediated by direct sensing of NO and the production of PPE1-5', an NO-induced small RNA, to sequester PdtaR. In Mycobacterium tuberculosis (strain CDC 1551 / Oshkosh), this protein is Sensor histidine kinase PdtaS (pdtaS).